A 471-amino-acid chain; its full sequence is Cytidine and dCMP deaminase domain-containing protein 1 (471 aa).

The interval 1 to 27 is disordered; the sequence is MAESNSWRSHRESDGNRSIPNGDDARN. CMP/dCMP-type deaminase domains lie at 57-153 and 312-460; these read LWME…LLSE and GVIR…KLNG. Zn(2+) contacts are provided by His99, Cys124, Cys127, and His393. The active-site Proton donor is the Glu395. Zn(2+) contacts are provided by Cys421 and Cys424.

It belongs to the cytidine and deoxycytidylate deaminase family. Zn(2+) is required as a cofactor.

It catalyses the reaction 2'-deoxycytidine + H2O + H(+) = 2'-deoxyuridine + NH4(+). It carries out the reaction cytidine + H2O + H(+) = uridine + NH4(+). Functionally, catalyzes the deamination of cytidine and deoxycytidine into uridine and deoxyuridine, respectively. In Danio rerio (Zebrafish), this protein is Cytidine and dCMP deaminase domain-containing protein 1 (cdadc1).